The sequence spans 320 residues: Ferrochelatase (320 aa).

Fe cation contacts are provided by histidine 194 and glutamate 275.

Belongs to the ferrochelatase family. In terms of assembly, monomer.

The protein localises to the cytoplasm. It catalyses the reaction heme b + 2 H(+) = protoporphyrin IX + Fe(2+). Its pathway is porphyrin-containing compound metabolism; protoheme biosynthesis; protoheme from protoporphyrin-IX: step 1/1. Functionally, catalyzes the ferrous insertion into protoporphyrin IX. The chain is Ferrochelatase from Shigella sonnei (strain Ss046).